The chain runs to 277 residues: Ras suppressor protein 1 (277 aa).

A disordered region spans residues 1–23 (MSKSLKKLVEESREKNQPEVDMS). The residue at position 2 (Ser-2) is an N-acetylserine. Residues 7–23 (KLVEESREKNQPEVDMS) show a composition bias toward basic and acidic residues. LRR repeat units follow at residues 41 to 63 (HITQLVLSHNKLTTVPPNVAELK), 64 to 85 (NLEVLNFFNNQIEELPTQISSL), 87 to 108 (KLKHLNLGMNRLNTLPRGFGSS), 110 to 133 (LLEVLELTYNNLNEHSLPGNFFYL), 135 to 156 (TLRALYLSDNDFEILPPDIGKL), 158 to 179 (KLQILSLRDNDLISLPKEIGEL), and 181 to 202 (QLKELHIQGNRLTVLPPELGNL). The segment at 250 to 277 (MQANPEPPKKNNDKSKKISRKPLAAKNK) is disordered. Positions 256–265 (PPKKNNDKSK) are enriched in basic and acidic residues.

In terms of biological role, potentially plays a role in the Ras signal transduction pathway. Capable of suppressing v-Ras transformation in vitro. The sequence is that of Ras suppressor protein 1 (Rsu1) from Mus musculus (Mouse).